Consider the following 154-residue polypeptide: Large ribosomal subunit protein uL15 (154 aa).

Positions Met-1–Ser-54 are disordered.

The protein belongs to the universal ribosomal protein uL15 family. In terms of assembly, part of the 50S ribosomal subunit.

Its function is as follows. Binds to the 23S rRNA. This is Large ribosomal subunit protein uL15 from Deinococcus geothermalis (strain DSM 11300 / CIP 105573 / AG-3a).